Consider the following 222-residue polypeptide: Chymotrypsin-1 (222 aa).

Residues 1–221 (IVGGKDAPVG…FVSWINANLK (221 aa)) enclose the Peptidase S1 domain. An intrachain disulfide couples cysteine 26 to cysteine 42. Residues histidine 41 and aspartate 87 each act as charge relay system in the active site. 2 disulfide bridges follow: cysteine 151–cysteine 164 and cysteine 174–cysteine 198. Catalysis depends on serine 178, which acts as the Charge relay system.

Belongs to the peptidase S1 family.

It localises to the secreted. It is found in the extracellular space. It catalyses the reaction Preferential cleavage: Tyr-|-Xaa, Trp-|-Xaa, Phe-|-Xaa, Leu-|-Xaa.. This Solenopsis invicta (Red imported fire ant) protein is Chymotrypsin-1.